Consider the following 738-residue polypeptide: Eukaryotic translation initiation factor 3 subunit B (738 aa).

The segment covering 1–10 has biased composition (polar residues); it reads MAPSFENLSE. A disordered region spans residues 1-20; it reads MAPSFENLSEQDLHEEEEEE. The RRM domain maps to 40–126; that stretch reads TFVVIDGLPV…HTLLVNKLMD (87 aa). WD repeat units follow at residues 193 to 230, 232 to 289, 301 to 342, 454 to 494, 511 to 554, and 569 to 607; these read AHWT…KQKQ, PHPF…RSFV, QPKK…LLGK, SLKD…SFFA, IEKK…EKND, and VDHY…HTFS. The disordered stretch occupies residues 693–720; the sequence is EAYGLPEEADQPKAAKDAPTNTEDKGET. A compositionally biased stretch (basic and acidic residues) spans 702–720; sequence DQPKAAKDAPTNTEDKGET.

This sequence belongs to the eIF-3 subunit B family. Component of the eukaryotic translation initiation factor 3 (eIF-3) complex.

It is found in the cytoplasm. Its function is as follows. RNA-binding component of the eukaryotic translation initiation factor 3 (eIF-3) complex, which is involved in protein synthesis of a specialized repertoire of mRNAs and, together with other initiation factors, stimulates binding of mRNA and methionyl-tRNAi to the 40S ribosome. The eIF-3 complex specifically targets and initiates translation of a subset of mRNAs involved in cell proliferation. The protein is Eukaryotic translation initiation factor 3 subunit B (prt1) of Emericella nidulans (strain FGSC A4 / ATCC 38163 / CBS 112.46 / NRRL 194 / M139) (Aspergillus nidulans).